The sequence spans 158 residues: EOLA-like protein (158 aa).

The 87-residue stretch at 6–92 folds into the ASCH domain; sequence LSFRQPYAGF…IAGLVDIGET (87 aa).

Belongs to the EOLA family.

This chain is EOLA-like protein, found in Pongo abelii (Sumatran orangutan).